Here is a 77-residue protein sequence, read N- to C-terminus: Protein AC145 (77 aa).

Its subcellular location is the host nucleus. The protein resides in the virion. In terms of biological role, plays a role in primary oral infection of the host. This is Protein AC145 from Autographa californica nuclear polyhedrosis virus (AcMNPV).